A 27-amino-acid chain; its full sequence is U1-poneritoxin-Na3b (27 aa).

This sequence belongs to the ponericin-G family. As to expression, expressed by the venom gland.

Its subcellular location is the secreted. In terms of biological role, shows a broad spectrum of activity against both Gram-positive and Gram-negative bacteria. Also has antimicrobial activity against S.cerevisiae. Has insecticidal and non-hemolytic activity. The sequence is that of U1-poneritoxin-Na3b from Neoponera apicalis (Ant).